A 383-amino-acid chain; its full sequence is BRISC and BRCA1-A complex member 2 (383 aa).

Met1 is subject to N-acetylmethionine. Ser2 is modified (phosphoserine). UEV-like regions lie at residues 30–147 (DATN…TLLE) and 275–364 (IAAF…RAKA).

This sequence belongs to the BABAM2 family. Component of the ARISC complex, at least composed of UIMC1/RAP80, ABRAXAS1, BRCC3/BRCC36, BABAM2 and BABAM1/NBA1. Component of the BRCA1-A complex, at least composed of BRCA1, BARD1, UIMC1/RAP80, ABRAXAS1, BRCC3/BRCC36, BABAM2 and BABAM1/NBA1. In the BRCA1-A complex, interacts directly with ABRAXAS1, BRCC3/BRCC36 and BABAM1/NBA1. Binds polyubiquitin. Component of the BRISC complex, at least composed of ABRAXAS2, BRCC3/BRCC36, BABAM2 and BABAM1/NBA1. Identified in a complex with SHMT2 and the other subunits of the BRISC complex. Component of the BRCA1/BRCA2 containing complex (BRCC), which also contains BRCA1, BRCA2, BARD1, BRCC3/BRCC36 and RAD51. BRCC is a ubiquitin E3 ligase complex that enhances cellular survival following DNA damage. May interact with FAS and TNFRSF1A. As to expression, expressed in all cell lines examined. Highly expressed in placenta.

The protein resides in the cytoplasm. Its subcellular location is the nucleus. Its function is as follows. Component of the BRCA1-A complex, a complex that specifically recognizes 'Lys-63'-linked ubiquitinated histones H2A and H2AX at DNA lesions sites, leading to target the BRCA1-BARD1 heterodimer to sites of DNA damage at double-strand breaks (DSBs). The BRCA1-A complex also possesses deubiquitinase activity that specifically removes 'Lys-63'-linked ubiquitin on histones H2A and H2AX. In the BRCA1-A complex, it acts as an adapter that bridges the interaction between BABAM1/NBA1 and the rest of the complex, thereby being required for the complex integrity and modulating the E3 ubiquitin ligase activity of the BRCA1-BARD1 heterodimer. Component of the BRISC complex, a multiprotein complex that specifically cleaves 'Lys-63'-linked ubiquitin in various substrates. Within the BRISC complex, acts as an adapter that bridges the interaction between BABAM1/NBA1 and the rest of the complex, thereby being required for the complex integrity. The BRISC complex is required for normal mitotic spindle assembly and microtubule attachment to kinetochores via its role in deubiquitinating NUMA1. The BRISC complex plays a role in interferon signaling via its role in the deubiquitination of the interferon receptor IFNAR1; deubiquitination increases IFNAR1 activity by enhancing its stability and cell surface expression. Down-regulates the response to bacterial lipopolysaccharide (LPS) via its role in IFNAR1 deubiquitination. May play a role in homeostasis or cellular differentiation in cells of neural, epithelial and germline origins. May also act as a death receptor-associated anti-apoptotic protein, which inhibits the mitochondrial apoptotic pathway. May regulate TNF-alpha signaling through its interactions with TNFRSF1A; however these effects may be indirect. This chain is BRISC and BRCA1-A complex member 2, found in Homo sapiens (Human).